The primary structure comprises 254 residues: MVIANSNIIFVAGLGGIGLDTSREIVKSGPKNLVLLDRIDNPAAIAELSALNPKVTVTFYPYDVTVPLAETKKLLKTIFDKLKTVDLLINGAGILDDHQIERTIAVNFTGTVNTTTAIMDFWDKRNGGPGGVIANICSVTGFNSIYQVPVYSASKAAALSFTNSLARLASVTGVTAYSINPGITKTVLVHKFNSWLNVEPRVAELLLEHPTQTTVQCAQNFVKAIEANQNGAIWKLDLGRLDPIEWTKHWDSGI.

10–33 lines the NAD(+) pocket; sequence FVAGLGGIGLDTSREIVKSGPKNL. S138 lines the substrate pocket. Y151 acts as the Proton acceptor in catalysis.

This sequence belongs to the short-chain dehydrogenases/reductases (SDR) family. In terms of assembly, homodimer.

The catalysed reaction is a primary alcohol + NAD(+) = an aldehyde + NADH + H(+). It carries out the reaction a secondary alcohol + NAD(+) = a ketone + NADH + H(+). This Drosophila mimica (Fruit fly) protein is Alcohol dehydrogenase (Adh).